The chain runs to 188 residues: UPF0200 protein M164_1169 (188 aa).

15–22 (GMPGSGKS) contacts ATP.

This sequence belongs to the UPF0200 family.

The sequence is that of UPF0200 protein M164_1169 from Saccharolobus islandicus (strain M.16.4 / Kamchatka #3) (Sulfolobus islandicus).